The sequence spans 108 residues: Ribulose bisphosphate carboxylase small subunit (108 aa).

This sequence belongs to the RuBisCO small chain family. As to quaternary structure, heterohexadecamer of 8 large and 8 small subunits.

In terms of biological role, ruBisCO catalyzes two reactions: the carboxylation of D-ribulose 1,5-bisphosphate, the primary event in carbon dioxide fixation, as well as the oxidative fragmentation of the pentose substrate. Both reactions occur simultaneously and in competition at the same active site. Although the small subunit is not catalytic it is essential for maximal activity. The polypeptide is Ribulose bisphosphate carboxylase small subunit (Nitrobacter vulgaris).